The primary structure comprises 343 residues: Serpentine receptor class alpha-11 (343 aa).

Residues 1-24 (MSSPDTPVCASPQQMEMYNSHFYT) are Extracellular-facing. A helical membrane pass occupies residues 25 to 45 (CALFFNLLIAFTSMTLIIMAI). The Cytoplasmic portion of the chain corresponds to 46 to 60 (RKLLTESIINTSTRM). Residues 61 to 81 (FLIVGLLCCSLHQTAYIVLRV) form a helical membrane-spanning segment. At 82–106 (QVIFQILFKLDQPCKLYYKAYDCKY) the chain is on the extracellular side. Residues 107 to 127 (VTFSLVAGNTGMIFIQSAMTI) form a helical membrane-spanning segment. Topologically, residues 128 to 146 (DRILTTVFTNLWPKLKYWP) are cytoplasmic. The chain crosses the membrane as a helical span at residues 147–167 (GVILSSFMIGCNFTNVQFIFW). Over 168–192 (NDPLTDYVPTCGQFPPKSVGRFQKF) the chain is Extracellular. Residues 193 to 213 (LEIALYMSLAHMVINVIILYI) form a helical membrane-spanning segment. The Cytoplasmic portion of the chain corresponds to 214–247 (NVVQDRRQRLVSTHDQSQSFDVNQRFQSRVALKS). Residues 248–268 (TQAIFFLSMSQFLSCFLYTIF) form a helical membrane-spanning segment. Topologically, residues 269–291 (TKLYLTLQPDMTPLQSGLTLALT) are extracellular. Residues 292–312 (YTTPYACIAIPSLIMVTLTFI) form a helical membrane-spanning segment. The Cytoplasmic portion of the chain corresponds to 313–343 (RNQRHRSINALRSQTETGDQYMQKIKKIWDK).

The protein belongs to the nematode receptor-like protein sra family.

The protein localises to the membrane. In terms of biological role, a G protein-coupled receptor required for olfactory imprinting a requisite in ordorant response such as benzaldehyde and isoamylalcohol. This is Serpentine receptor class alpha-11 from Caenorhabditis briggsae.